A 299-amino-acid polypeptide reads, in one-letter code: rRNA methyltransferase (299 aa).

Residues 14–53 (AEKRSGRGRMAAARTTGAQSRKTAQRSGRSEADRRRRVHG) form a disordered region. Residues 21–31 (GRMAAARTTGA) are compositionally biased toward low complexity. Residues asparagine 55, leucine 57, glycine 82, glutamate 103, aspartate 128, and asparagine 144 each contribute to the S-adenosyl-L-methionine site.

This sequence belongs to the class I-like SAM-binding methyltransferase superfamily. rRNA adenine N(6)-methyltransferase family.

Probable RNA methylase. Confers resistance to carbomycin and several other macrolides, lincomycin and vernamycin B, but not to all macrolide-lincosamide-streptogramin B antibiotics. The protein is rRNA methyltransferase (carB) of Streptomyces thermotolerans.